A 332-amino-acid chain; its full sequence is DNA-directed RNA polymerase subunit alpha (332 aa).

The alpha N-terminal domain (alpha-NTD) stretch occupies residues 1-244; sequence MKKHAKVYYS…AHLNLLADVE (244 aa). Residues 259 to 332 are alpha C-terminal domain (alpha-CTD); that stretch reads IKEEPIRRFS…NYKNENKGEN (74 aa).

This sequence belongs to the RNA polymerase alpha chain family. As to quaternary structure, homodimer. The RNAP catalytic core consists of 2 alpha, 1 beta, 1 beta' and 1 omega subunit. When a sigma factor is associated with the core the holoenzyme is formed, which can initiate transcription.

It carries out the reaction RNA(n) + a ribonucleoside 5'-triphosphate = RNA(n+1) + diphosphate. In terms of biological role, DNA-dependent RNA polymerase catalyzes the transcription of DNA into RNA using the four ribonucleoside triphosphates as substrates. This Mesomycoplasma hyopneumoniae (strain 232) (Mycoplasma hyopneumoniae) protein is DNA-directed RNA polymerase subunit alpha.